The primary structure comprises 331 residues: MKKVIFSGIQPSGQLTLGNYIGALKQFGQFQDEYECFYCIVDEHAITVPQDRLKLREQTRSLAALYLAVGLDPEKATLFIQSEVAAHAQAAWILQCNVYIGELERMTQFKDKSDGKAGVSAGLLTYPPLMAADILLYQTNLVPVGEDQKQHIELTRDLAERFNKKHADIFTMPEVFIPKQGARVMSLQDPTKKMSKSDANLKNAIFLLDPPATIRKKIKSAVTDSSGIIEYNKEEKPGVSNLLTIYSVITGETIANIEEKYVGKGYGDFKTDLAELVVAELEQIQERYYAYLESEELDNILDAGAEKAARVANKTLKKMENGVGLGRKRRK.

Residues 10–12 (QPS) and 18–19 (GN) each bind ATP. The 'HIGH' region signature appears at 11–19 (PSGQLTLGN). Position 133 (D133) interacts with L-tryptophan. ATP is bound by residues 145–147 (GED), V184, and 193–197 (KMSKS). A 'KMSKS' region motif is present at residues 193-197 (KMSKS).

This sequence belongs to the class-I aminoacyl-tRNA synthetase family. As to quaternary structure, homodimer.

Its subcellular location is the cytoplasm. It carries out the reaction tRNA(Trp) + L-tryptophan + ATP = L-tryptophyl-tRNA(Trp) + AMP + diphosphate + H(+). Its function is as follows. Catalyzes the attachment of tryptophan to tRNA(Trp). The polypeptide is Tryptophan--tRNA ligase (Listeria innocua serovar 6a (strain ATCC BAA-680 / CLIP 11262)).